A 383-amino-acid chain; its full sequence is N-acetyldiaminopimelate deacetylase (383 aa).

The active site involves Asp75. Glu134 (proton acceptor) is an active-site residue.

The protein belongs to the peptidase M20A family. N-acetyldiaminopimelate deacetylase subfamily.

It catalyses the reaction N-acetyl-(2S,6S)-2,6-diaminopimelate + H2O = (2S,6S)-2,6-diaminopimelate + acetate. Its pathway is amino-acid biosynthesis; L-lysine biosynthesis via DAP pathway; LL-2,6-diaminopimelate from (S)-tetrahydrodipicolinate (acetylase route): step 3/3. Functionally, catalyzes the conversion of N-acetyl-diaminopimelate to diaminopimelate and acetate. The polypeptide is N-acetyldiaminopimelate deacetylase (Lactobacillus acidophilus (strain ATCC 700396 / NCK56 / N2 / NCFM)).